The primary structure comprises 140 residues: Ubiquitin-like protein ATG12 (140 aa).

A disordered region spans residues 1 to 50; it reads MAEEPQSVLQLPTSIAAGGEGLTDVSPETTTPEPPSSAAVSPGTEEPAGD. Residues 25–42 show a composition bias toward low complexity; the sequence is VSPETTTPEPPSSAAVSP. Gly140 is covalently cross-linked (Glycyl lysine isopeptide (Gly-Lys) (interchain with K-130 in ATG5)).

Belongs to the ATG12 family. As to quaternary structure, forms a conjugate with ATG5. Part of the minor complex composed of 4 sets of ATG12-ATG5 and ATG16L1 (400 kDa); this complex interacts with ATG3 leading to disruption of ATG7 interaction and promotion of ATG8-like proteins lipidation. Forms an 800-kDa complex composed of ATG12-ATG5 and ATG16L2. Interacts with DHX58/RIG-1, IFIH1/MDA5 and MAVS/IPS-1 in monomeric form as well as in ATG12-ATG5 conjugate. The interaction with MAVS is further enhanced upon vesicular stomatitis virus (VSV) infection. Interacts with ATG3; this interaction is essential for phosphatidylethanolamine (PE)-conjugated ATG8-like proteins formation. Interacts with ATG7. Interacts with ATG10. The ATG12-ATG5 conjugate interacts with RAB33A; this interaction is bridged by ATG16L1 and promotes ATG12-ATG5-ATG16L1 complex recruitment to phagophores. Interacts with TECPR1. Interacts with SH3BGRL. The ATG12-ATG5 conjugate interacts with PDCD6IP (via the BRO1 domain); this interaction is bridged by ATG12 and promotes multiple PDCD6IP-mediated functions such as endolysosomal trafficking, macroautophagy and exosome biogenesis. Post-translationally, acetylated by EP300. In terms of tissue distribution, ubiquitous.

The protein resides in the cytoplasm. It localises to the preautophagosomal structure membrane. Functionally, ubiquitin-like protein involved in autophagy vesicles formation. Conjugation with ATG5 through a ubiquitin-like conjugating system involving also ATG7 as an E1-like activating enzyme and ATG10 as an E2-like conjugating enzyme, is essential for its function. The ATG12-ATG5 conjugate acts as an E3-like enzyme which is required for lipidation of ATG8 family proteins and their association to the vesicle membranes. As part of the ATG8 conjugation system with ATG5 and ATG16L1, required for recruitment of LRRK2 to stressed lysosomes and induction of LRRK2 kinase activity in response to lysosomal stress. Its function is as follows. (Microbial infection) May act as a proviral factor. In association with ATG5, negatively regulates the innate antiviral immune response by impairing the type I IFN production pathway upon vesicular stomatitis virus (VSV) infection. Required for the translation of incoming hepatitis C virus (HCV) RNA and, thereby, for the initiation of HCV replication, but not required once infection is established. The chain is Ubiquitin-like protein ATG12 from Homo sapiens (Human).